Here is a 228-residue protein sequence, read N- to C-terminus: Somatolactin (228 aa).

Positions 1 to 24 are cleaved as a signal peptide; it reads MFSIRMNKVLQGFVCLMLTHRIVG. 3 disulfides stabilise this stretch: cysteine 29–cysteine 38, cysteine 88–cysteine 200, and cysteine 217–cysteine 225. N-linked (GlcNAc...) asparagine glycosylation is found at asparagine 141 and asparagine 177.

The protein belongs to the somatotropin/prolactin family.

Its subcellular location is the secreted. The sequence is that of Somatolactin from Anguilla anguilla (European freshwater eel).